A 245-amino-acid polypeptide reads, in one-letter code: Orotidine 5'-phosphate decarboxylase (245 aa).

Residues Asp22, Lys44, 71-80 (DLKFHDIPNT), Thr131, Arg192, Gln201, Gly221, and Arg222 each bind substrate. Catalysis depends on Lys73, which acts as the Proton donor.

It belongs to the OMP decarboxylase family. Type 1 subfamily. Homodimer.

The catalysed reaction is orotidine 5'-phosphate + H(+) = UMP + CO2. Its pathway is pyrimidine metabolism; UMP biosynthesis via de novo pathway; UMP from orotate: step 2/2. Catalyzes the decarboxylation of orotidine 5'-monophosphate (OMP) to uridine 5'-monophosphate (UMP). This Salmonella typhi protein is Orotidine 5'-phosphate decarboxylase.